The sequence spans 185 residues: Transcription termination/antitermination protein NusG (185 aa).

Residues 134-162 enclose the KOW domain; it reads PGQMVRVIDGPFNDFDGLVEEVNYEKNRL.

The protein belongs to the NusG family.

In terms of biological role, participates in transcription elongation, termination and antitermination. The chain is Transcription termination/antitermination protein NusG from Xylella fastidiosa (strain Temecula1 / ATCC 700964).